A 637-amino-acid chain; its full sequence is MRDAIIADPLLAIDHETVAEKKKQSKNLKISLLLLLILLATSGYYSFSDNITTVFLSRQAIDDDHSLSLGTISDVVESENGVVAADDARCSEIGASVLRSGGHAVDAAVAITLCVGVVNPMSSGIGGGSFLIVSSQKDSKAEAFDMRETAPLAASKDMYKNDASAKSLGALSMGVPGEIAGLYEAWKRYGRLPWKPLFEPAIKLARDGFVVYPYLGKAISTKVAMILKDPGMRSVFSRNGQVLKTGETCYNPELAQSLETISEQGPGAFYNGTVGEKLVKDVKKAGGIITMDDLRSYKVRVTDAMSVDVMGYTVHGMPPPSGGTVGFSMVMNILDSYSNLYTASGRELGLHRLIEAMKHMFAARMDLGDPEFVNVTNSMNQMLSKAHAEEIQKRIFDNTTFPPEYYMNRWSQLRDQGTSHFCVVDADRNSVSMTSTVNYRFGAGVLSPSTGIVLNNEMDDFSTPTEITPDMLPPAPTNFIEPNKRPLSSMTPLVITKDGEFVAALGGAGGMHIIPAVLQVFLNCFVLNMKPKEAVESARIYHRLIPNVVSYENFTTINGDHIGVSEDTKMFLAERGHELKELSGGAIVQLIVQSFKEEKEEEMIIEIGRKIGKKSKPLKGLLTAVSDPRKDGKPAAV.

Residues 28–48 (LKISLLLLLILLATSGYYSFS) traverse the membrane as a helical segment. A glycan (N-linked (GlcNAc...) asparagine) is linked at Asn50. Arg147 is an L-glutamate binding site. Residues Asn271, Asn374, and Asn398 are each glycosylated (N-linked (GlcNAc...) asparagine). Thr418 (nucleophile) is an active-site residue. L-glutamate contacts are provided by residues Thr436, Asn438, Glu457, Asp460, 488-489 (SS), and 509-510 (GG). An N-linked (GlcNAc...) asparagine glycan is attached at Asn553.

It belongs to the gamma-glutamyltransferase family. Expressed in roots, cotyledons, leaves, flowers and siliques.

The protein resides in the vacuole membrane. The enzyme catalyses an N-terminal (5-L-glutamyl)-[peptide] + an alpha-amino acid = 5-L-glutamyl amino acid + an N-terminal L-alpha-aminoacyl-[peptide]. It carries out the reaction glutathione + H2O = L-cysteinylglycine + L-glutamate. The catalysed reaction is an S-substituted glutathione + H2O = an S-substituted L-cysteinylglycine + L-glutamate. It functions in the pathway sulfur metabolism; glutathione metabolism. May play a role in protecting plants from some xenobiotic chemicals by degrading vacuolar glutathione conjugates into cysteine conjugates. In Arabidopsis thaliana (Mouse-ear cress), this protein is Glutathione hydrolase 3 (GGT3).